A 35-amino-acid polypeptide reads, in one-letter code: Cupiennin-2d (35 aa).

At Gln-35 the chain carries Glutamine amide.

Expressed by the venom gland.

It localises to the secreted. This Cupiennius salei (American wandering spider) protein is Cupiennin-2d.